Reading from the N-terminus, the 423-residue chain is Glutamate-1-semialdehyde 2,1-aminomutase (423 aa).

Lys259 carries the post-translational modification N6-(pyridoxal phosphate)lysine.

Belongs to the class-III pyridoxal-phosphate-dependent aminotransferase family. HemL subfamily. The cofactor is pyridoxal 5'-phosphate.

The protein resides in the cytoplasm. The enzyme catalyses (S)-4-amino-5-oxopentanoate = 5-aminolevulinate. Its pathway is porphyrin-containing compound metabolism; protoporphyrin-IX biosynthesis; 5-aminolevulinate from L-glutamyl-tRNA(Glu): step 2/2. This is Glutamate-1-semialdehyde 2,1-aminomutase from Methanobrevibacter smithii (strain ATCC 35061 / DSM 861 / OCM 144 / PS).